Here is a 1125-residue protein sequence, read N- to C-terminus: Probable inorganic carbon transporter subunit DabA (1125 aa).

4 residues coordinate Zn(2+): cysteine 578, aspartate 580, histidine 769, and cysteine 784. Residues 1106–1125 form a disordered region; the sequence is SDPRPPALVEPKQTETHHAA.

It belongs to the inorganic carbon transporter (TC 9.A.2) DabA family. As to quaternary structure, forms a complex with DabB. The cofactor is Zn(2+).

The protein localises to the cell inner membrane. Part of an energy-coupled inorganic carbon pump. This Nitrosococcus oceani (strain ATCC 19707 / BCRC 17464 / JCM 30415 / NCIMB 11848 / C-107) protein is Probable inorganic carbon transporter subunit DabA.